We begin with the raw amino-acid sequence, 594 residues long: UvrABC system protein C (594 aa).

One can recognise a GIY-YIG domain in the interval 13–99; it reads NSSGVYQYFD…IKQLKPKYNI (87 aa). One can recognise a UVR domain in the interval 205–240; it reads DRLIKELELKMERLSNNLRFEEALIYRDRIAKIQKI.

Belongs to the UvrC family. In terms of assembly, interacts with UvrB in an incision complex.

It is found in the cytoplasm. In terms of biological role, the UvrABC repair system catalyzes the recognition and processing of DNA lesions. UvrC both incises the 5' and 3' sides of the lesion. The N-terminal half is responsible for the 3' incision and the C-terminal half is responsible for the 5' incision. This is UvrABC system protein C from Helicobacter pylori (strain ATCC 700392 / 26695) (Campylobacter pylori).